We begin with the raw amino-acid sequence, 311 residues long: Replication initiation protein (311 aa).

Belongs to the plasmid replication initiation factor family.

Its function is as follows. This protein is probably a specific topoisomerase involved in initiating replication. This protein is specifically required and may be rate-limiting for replication of the plasmid in vivo. This is Replication initiation protein (repD) from Staphylococcus aureus.